Consider the following 203-residue polypeptide: Molybdenum cofactor guanylyltransferase (203 aa).

Residues 20 to 22, lysine 33, asparagine 61, aspartate 78, and aspartate 108 each bind GTP; that span reads LAG. Aspartate 108 lines the Mg(2+) pocket.

This sequence belongs to the MobA family. Monomer. It depends on Mg(2+) as a cofactor.

It localises to the cytoplasm. The enzyme catalyses Mo-molybdopterin + GTP + H(+) = Mo-molybdopterin guanine dinucleotide + diphosphate. Transfers a GMP moiety from GTP to Mo-molybdopterin (Mo-MPT) cofactor (Moco or molybdenum cofactor) to form Mo-molybdopterin guanine dinucleotide (Mo-MGD) cofactor. This is Molybdenum cofactor guanylyltransferase from Vibrio cholerae serotype O1 (strain ATCC 39315 / El Tor Inaba N16961).